Reading from the N-terminus, the 99-residue chain is Seminal vesicle secretory protein 6 (99 aa).

An N-terminal signal peptide occupies residues 1–21 (MSPTSFFLLTMLLVLVTETAA).

This sequence belongs to the SVP2/SVP5/SVP6 family. In terms of tissue distribution, testis.

It localises to the secreted. The protein resides in the extracellular space. In Mus musculus (Mouse), this protein is Seminal vesicle secretory protein 6 (Svs6).